The following is a 140-amino-acid chain: Peptidyl-prolyl cis-trans isomerase FKBP2 (140 aa).

A signal peptide spans 1–22 (MRLSWILTILSICLSALAAATG). Positions 47–135 (GDVLHMHYTG…VFEVELLKIE (89 aa)) constitute a PPIase FKBP-type domain. The Prevents secretion from ER signature appears at 137–140 (RSEL).

This sequence belongs to the FKBP-type PPIase family. FKBP2 subfamily. In terms of assembly, interacts with ARFGEF1/BIG1 and the C-terminal of EPB41L2.

The protein resides in the endoplasmic reticulum membrane. The catalysed reaction is [protein]-peptidylproline (omega=180) = [protein]-peptidylproline (omega=0). With respect to regulation, inhibited by both FK506 and rapamycin. In terms of biological role, PPIases accelerate the folding of proteins. It catalyzes the cis-trans isomerization of proline imidic peptide bonds in oligopeptides. This chain is Peptidyl-prolyl cis-trans isomerase FKBP2 (Fkbp2), found in Mus musculus (Mouse).